A 364-amino-acid chain; its full sequence is Protein spindle-F (364 aa).

The tract at residues 1-26 (MEASAAKITPMASSMSASGSTNSPSS) is disordered. Residues 9–26 (TPMASSMSASGSTNSPSS) are compositionally biased toward low complexity. Residues 32-114 (ALQVALQTIK…GMVSNENRRL (83 aa)) adopt a coiled-coil conformation. Residue S53 is modified to Phosphoserine. Residues 56–75 (EENQQLREASSRSEGAPRAN) form a disordered region. A phosphoserine mark is found at S85, S172, and S202. Residues 210 to 243 (AKRCLDGLQELRREAMKQQQELRSVMTLLENRIA) are a coiled coil. 2 positions are modified to phosphoserine: S264 and S270. The UBZ1-type zinc-finger motif lies at 310 to 336 (EKTCPMCGKQYSSQVSFNAFREHVEMH). Zn(2+) is bound by residues C313 and C316. S325 is subject to Phosphoserine. Positions 332 and 336 each coordinate Zn(2+). Residue S349 is modified to Phosphoserine.

In terms of assembly, forms homooligomers. Interacts with the dynein light chain ctp. Interacts (via C-terminus) with IKKepsilon; this leads to phosphorylation of spn-F. Forms ternary complexes with ctp and IKKepsilon; this is required for spn-F redistribution from puncta in larval neurons and for dendrite pruning. Interacts with ctp and IKKepsilon through distinct regions. Interacts (via C-terminus) with jvl. Post-translationally, phosphorylated by IKKepsilon. Phosphorylation is required for spn-F neuronal distribution and dendrite pruning and reduces spn-F homooligomerization. It does not lead to spn-F degradation. In pupal bristles, localizes to the bristle tip throughout the elongation period (at protein level).

The protein resides in the cytoplasm. It is found in the cytoskeleton. The protein localises to the cell projection. Its subcellular location is the axon. It localises to the dendrite. The protein resides in the perikaryon. Its function is as follows. Plays a role in oocyte axis determination and microtubule organization during oogenesis. Also required for polarized organization of the bristle. Required, with jvl, for activation of the kinase IKKepsilon in the germ line. Also required for localization of IKKepsilon to the distal tip of elongating bristles by acting as an adapter linking IKKepsilon and cytoplasmic dynein. Involved in dendrite pruning in larval sensory neurons during metamorphosis. The chain is Protein spindle-F from Drosophila melanogaster (Fruit fly).